The sequence spans 879 residues: Metabotropic glutamate receptor 3 (879 aa).

An N-terminal signal peptide occupies residues 1–24; sequence MKMLTRLQVLTLALFSKGFLLSLG. Topologically, residues 25–577 are extracellular; sequence DHNFLRREIK…DYIRWEDAWA (553 aa). The cysteines at positions 57 and 99 are disulfide-linked. Residues S151 and 172–174 each bind L-glutamate; that span reads AST. Residue N209 is glycosylated (N-linked (GlcNAc...) asparagine). Y222 lines the L-glutamate pocket. 7 cysteine pairs are disulfide-bonded: C240–C527, C361–C373, C412–C419, C509–C528, C513–C531, C534–C546, and C549–C562. N292 carries an N-linked (GlcNAc...) asparagine glycan. D301 contributes to the L-glutamate binding site. K389 contributes to the L-glutamate binding site. N-linked (GlcNAc...) asparagine glycans are attached at residues N414 and N439. A helical transmembrane segment spans residues 578 to 598; sequence IGPVTIACLGFMCTCMVITVF. Residues 599–613 are Cytoplasmic-facing; it reads IKHNNTPLVKASGRE. The helical transmembrane segment at 614 to 634 threads the bilayer; it reads LCYILLFGVGLSYCMTFFFIA. Topologically, residues 635–688 are extracellular; the sequence is KPSPVICALRRLGLGSSFAICYSALLTKTNCIARIFDGVKNGAQRPKFISPSSQ. The helical transmembrane segment at 689–709 threads the bilayer; that stretch reads VFICLGLILVQIVMVSVWLIL. At 710 to 735 the chain is on the cytoplasmic side; the sequence is EAPGTRRYTLAEKRETVILKCNVKDS. The chain crosses the membrane as a helical span at residues 736–756; the sequence is SMLISLTYDVILVILCTVYAF. Over 757–769 the chain is Extracellular; it reads KTRKCPENFNEAK. A helical transmembrane segment spans residues 770–790; sequence FIGFTMYTTCIIWLAFLPIFY. Over 791-807 the chain is Cytoplasmic; sequence VTSSDYRVQTTTMCISV. The helical transmembrane segment at 808 to 828 threads the bilayer; the sequence is SLSGFVVLGCLFAPKVHIILF. The Extracellular portion of the chain corresponds to 829 to 879; it reads QPQKNVVTHRLHLNRFSVSGTGTTYSQSSASMYVPTVCNGREVLDSTTSSL.

It belongs to the G-protein coupled receptor 3 family. In terms of assembly, interacts with TAMALIN.

It is found in the cell membrane. Functionally, G-protein coupled receptor for glutamate. Ligand binding causes a conformation change that triggers signaling via guanine nucleotide-binding proteins (G proteins) and modulates the activity of down-stream effectors. Signaling inhibits adenylate cyclase activity. This is Metabotropic glutamate receptor 3 (GRM3) from Macaca fascicularis (Crab-eating macaque).